Consider the following 289-residue polypeptide: ATP synthase gamma chain (289 aa).

It belongs to the ATPase gamma chain family. In terms of assembly, F-type ATPases have 2 components, CF(1) - the catalytic core - and CF(0) - the membrane proton channel. CF(1) has five subunits: alpha(3), beta(3), gamma(1), delta(1), epsilon(1). CF(0) has three main subunits: a, b and c.

Its subcellular location is the cell inner membrane. Produces ATP from ADP in the presence of a proton gradient across the membrane. The gamma chain is believed to be important in regulating ATPase activity and the flow of protons through the CF(0) complex. The chain is ATP synthase gamma chain from Nitrosococcus oceani (strain ATCC 19707 / BCRC 17464 / JCM 30415 / NCIMB 11848 / C-107).